The sequence spans 393 residues: Phosphopentomutase (393 aa).

Mn(2+)-binding residues include Asp-14, Asp-287, His-292, Asp-328, His-329, and His-340.

Belongs to the phosphopentomutase family. The cofactor is Mn(2+).

Its subcellular location is the cytoplasm. It carries out the reaction 2-deoxy-alpha-D-ribose 1-phosphate = 2-deoxy-D-ribose 5-phosphate. The enzyme catalyses alpha-D-ribose 1-phosphate = D-ribose 5-phosphate. It functions in the pathway carbohydrate degradation; 2-deoxy-D-ribose 1-phosphate degradation; D-glyceraldehyde 3-phosphate and acetaldehyde from 2-deoxy-alpha-D-ribose 1-phosphate: step 1/2. Functionally, isomerase that catalyzes the conversion of deoxy-ribose 1-phosphate (dRib-1-P) and ribose 1-phosphate (Rib-1-P) to deoxy-ribose 5-phosphate (dRib-5-P) and ribose 5-phosphate (Rib-5-P), respectively. This chain is Phosphopentomutase, found in Geobacillus stearothermophilus (Bacillus stearothermophilus).